Here is a 394-residue protein sequence, read N- to C-terminus: Ribulose bisphosphate carboxylase large chain (394 aa).

An N6,N6,N6-trimethyllysine modification is found at Lys-5. The substrate site is built by Asn-114 and Thr-164. Catalysis depends on Lys-166, which acts as the Proton acceptor. Position 168 (Lys-168) interacts with substrate. 3 residues coordinate Mg(2+): Lys-192, Asp-194, and Glu-195. Position 192 is an N6-carboxylysine (Lys-192). His-285 acts as the Proton acceptor in catalysis. Positions 286, 318, and 370 each coordinate substrate.

This sequence belongs to the RuBisCO large chain family. Type I subfamily. As to quaternary structure, heterohexadecamer of 8 large chains and 8 small chains. The cofactor is Mg(2+).

It is found in the plastid. Its subcellular location is the chloroplast. It catalyses the reaction 2 (2R)-3-phosphoglycerate + 2 H(+) = D-ribulose 1,5-bisphosphate + CO2 + H2O. The catalysed reaction is D-ribulose 1,5-bisphosphate + O2 = 2-phosphoglycolate + (2R)-3-phosphoglycerate + 2 H(+). Its function is as follows. RuBisCO catalyzes two reactions: the carboxylation of D-ribulose 1,5-bisphosphate, the primary event in carbon dioxide fixation, as well as the oxidative fragmentation of the pentose substrate in the photorespiration process. Both reactions occur simultaneously and in competition at the same active site. This chain is Ribulose bisphosphate carboxylase large chain (rbcL), found in Victoria cruziana (Santa Cruz water lily).